Reading from the N-terminus, the 180-residue chain is Large ribosomal subunit protein uL6 (180 aa).

This sequence belongs to the universal ribosomal protein uL6 family. In terms of assembly, part of the 50S ribosomal subunit.

Its function is as follows. This protein binds to the 23S rRNA, and is important in its secondary structure. It is located near the subunit interface in the base of the L7/L12 stalk, and near the tRNA binding site of the peptidyltransferase center. The chain is Large ribosomal subunit protein uL6 from Clostridium beijerinckii (strain ATCC 51743 / NCIMB 8052) (Clostridium acetobutylicum).